The primary structure comprises 288 residues: NAD(P)H-hydrate epimerase (288 aa).

Residues 1-48 (MSALRALLGLGLLAAGSRLRRVPGRAGACPAGSAWWEARRPHSGGGGE) constitute a mitochondrion transit peptide. The YjeF N-terminal domain maps to 65–275 (AQAVDEELFN…ALEKKYQLNL (211 aa)). 119-123 (NNGGD) contacts (6S)-NADPHX. A K(+)-binding site is contributed by N120. Residue K144 is modified to N6-succinyllysine. D185 serves as a coordination point for K(+). Residues 189–195 (GFSFKGD) and D218 contribute to the (6S)-NADPHX site. Residue S221 coordinates K(+).

This sequence belongs to the NnrE/AIBP family. Homodimer. Interacts with APOA1 and APOA2. Requires K(+) as cofactor. Post-translationally, undergoes physiological phosphorylation during sperm capacitation, downstream to PKA activation.

The protein localises to the mitochondrion. Its subcellular location is the secreted. It catalyses the reaction (6R)-NADHX = (6S)-NADHX. It carries out the reaction (6R)-NADPHX = (6S)-NADPHX. Its function is as follows. Catalyzes the epimerization of the S- and R-forms of NAD(P)HX, a damaged form of NAD(P)H that is a result of enzymatic or heat-dependent hydration. This is a prerequisite for the S-specific NAD(P)H-hydrate dehydratase to allow the repair of both epimers of NAD(P)HX. Accelerates cholesterol efflux from endothelial cells to high-density lipoprotein (HDL) and thereby regulates angiogenesis. The chain is NAD(P)H-hydrate epimerase from Canis lupus familiaris (Dog).